Consider the following 72-residue polypeptide: uncharacterized protein (72 aa).

The segment at 52–72 is disordered; it reads KGGRQRDEAVGVEELCKQHKE. The segment covering 55-72 has biased composition (basic and acidic residues); it reads RQRDEAVGVEELCKQHKE.

It belongs to the YiiE family.

This is an uncharacterized protein from Escherichia coli O6:H1 (strain CFT073 / ATCC 700928 / UPEC).